Reading from the N-terminus, the 364-residue chain is Solute carrier family 35 member C2 (364 aa).

The next 2 helical transmembrane spans lie at 14 to 34 (AALT…ITFY) and 42 to 62 (FHFP…FSAL). N-linked (GlcNAc...) asparagine glycosylation occurs at Asn102. 7 helical membrane passes run 104-124 (SFLY…VLFI), 136-156 (LRAA…MFTY), 166-186 (FALV…TQIL), 202-222 (FHLQ…FEGL), 238-258 (LLLW…GLGF), 272-292 (LSIA…HLLG), and 295-315 (ISLL…LHVA). Residues Ser335 and Ser336 each carry the phosphoserine modification.

This sequence belongs to the TPT transporter family. SLC35C subfamily.

Its subcellular location is the golgi apparatus. The protein localises to the cis-Golgi network membrane. It is found in the endoplasmic reticulum-Golgi intermediate compartment membrane. May play an important role in the cellular response to tissue hypoxia. May be either a GDP-fucose transporter that competes with SLC35C1 for GDP-fucose, or a factor that otherwise enhances the fucosylation of Notch and is required for optimal Notch signaling in mammalian cells. The polypeptide is Solute carrier family 35 member C2 (Slc35c2) (Mus musculus (Mouse)).